Reading from the N-terminus, the 457-residue chain is Serine--tRNA ligase (457 aa).

252–254 (TAE) contributes to the L-serine binding site. ATP-binding positions include 283-285 (RKE) and Val-299. Glu-306 lines the L-serine pocket. 370-373 (EMVS) lines the ATP pocket. Residue Thr-406 participates in L-serine binding.

The protein belongs to the class-II aminoacyl-tRNA synthetase family. Type-1 seryl-tRNA synthetase subfamily. As to quaternary structure, homodimer. The tRNA molecule binds across the dimer.

Its subcellular location is the cytoplasm. It catalyses the reaction tRNA(Ser) + L-serine + ATP = L-seryl-tRNA(Ser) + AMP + diphosphate + H(+). The catalysed reaction is tRNA(Sec) + L-serine + ATP = L-seryl-tRNA(Sec) + AMP + diphosphate + H(+). Its pathway is aminoacyl-tRNA biosynthesis; selenocysteinyl-tRNA(Sec) biosynthesis; L-seryl-tRNA(Sec) from L-serine and tRNA(Sec): step 1/1. Catalyzes the attachment of serine to tRNA(Ser). Is also able to aminoacylate tRNA(Sec) with serine, to form the misacylated tRNA L-seryl-tRNA(Sec), which will be further converted into selenocysteinyl-tRNA(Sec). The chain is Serine--tRNA ligase from Saccharolobus solfataricus (strain ATCC 35092 / DSM 1617 / JCM 11322 / P2) (Sulfolobus solfataricus).